The sequence spans 264 residues: NAD kinase 1 (264 aa).

Asp-45 functions as the Proton acceptor in the catalytic mechanism. NAD(+) contacts are provided by residues 45-46 (DG), Gly-46, 122-123 (NE), Arg-148, Asp-150, Ser-158, 161-166 (TAYNKS), and His-223.

This sequence belongs to the NAD kinase family. As to quaternary structure, homotetramer. A divalent metal cation is required as a cofactor.

It localises to the cytoplasm. The catalysed reaction is NAD(+) + ATP = ADP + NADP(+) + H(+). Competitively inhibited by 5'-thioacetyladenosine (TAA) and di-(5'-thioadenosine) (DTA). Its function is as follows. Involved in the regulation of the intracellular balance of NAD and NADP, and is a key enzyme in the biosynthesis of NADP. Catalyzes specifically the phosphorylation on 2'-hydroxyl of the adenosine moiety of NAD to yield NADP. This chain is NAD kinase 1, found in Listeria monocytogenes serovar 1/2a (strain ATCC BAA-679 / EGD-e).